A 658-amino-acid chain; its full sequence is UvrABC system protein B (658 aa).

Residues 26-413 enclose the Helicase ATP-binding domain; the sequence is EGINSGKKKQ…SPEVIEQIIR (388 aa). 39-46 contributes to the ATP binding site; the sequence is GATGTGKT. Positions 92-115 match the Beta-hairpin motif; it reads YYDYYQPEAYVPQTDTFIEKDAQI. Positions 430 to 596 constitute a Helicase C-terminal domain; that stretch reads QIDDLLGEIQ…TIQKGVRDVI (167 aa). The 36-residue stretch at 622 to 657 folds into the UVR domain; it reads EKTIAKMEAEMKEAAKALDFERAAELRDLLLELKAE.

The protein belongs to the UvrB family. Forms a heterotetramer with UvrA during the search for lesions. Interacts with UvrC in an incision complex.

It is found in the cytoplasm. Functionally, the UvrABC repair system catalyzes the recognition and processing of DNA lesions. A damage recognition complex composed of 2 UvrA and 2 UvrB subunits scans DNA for abnormalities. Upon binding of the UvrA(2)B(2) complex to a putative damaged site, the DNA wraps around one UvrB monomer. DNA wrap is dependent on ATP binding by UvrB and probably causes local melting of the DNA helix, facilitating insertion of UvrB beta-hairpin between the DNA strands. Then UvrB probes one DNA strand for the presence of a lesion. If a lesion is found the UvrA subunits dissociate and the UvrB-DNA preincision complex is formed. This complex is subsequently bound by UvrC and the second UvrB is released. If no lesion is found, the DNA wraps around the other UvrB subunit that will check the other stand for damage. In Bacillus cereus (strain ATCC 14579 / DSM 31 / CCUG 7414 / JCM 2152 / NBRC 15305 / NCIMB 9373 / NCTC 2599 / NRRL B-3711), this protein is UvrABC system protein B.